The following is a 78-amino-acid chain: Short neurotoxin OH-46 (78 aa).

An N-terminal signal peptide occupies residues 1-21 (MKNLLLTFLVVTIVCLDLGYT). Intrachain disulfides connect Cys24-Cys40, Cys33-Cys58, Cys62-Cys70, and Cys71-Cys76.

The protein belongs to the three-finger toxin family. Short-chain subfamily. In terms of tissue distribution, expressed by the venom gland.

It is found in the secreted. Functionally, this three-finger toxin binds and inhibits the nicotinic acetylcholine receptor (nAChR). The chain is Short neurotoxin OH-46 from Ophiophagus hannah (King cobra).